The primary structure comprises 545 residues: Glucose-6-phosphate isomerase (545 aa).

The active-site Proton donor is Glu-351. Active-site residues include His-382 and Lys-510.

This sequence belongs to the GPI family.

The protein resides in the cytoplasm. The catalysed reaction is alpha-D-glucose 6-phosphate = beta-D-fructose 6-phosphate. It functions in the pathway carbohydrate biosynthesis; gluconeogenesis. The protein operates within carbohydrate degradation; glycolysis; D-glyceraldehyde 3-phosphate and glycerone phosphate from D-glucose: step 2/4. Functionally, catalyzes the reversible isomerization of glucose-6-phosphate to fructose-6-phosphate. The protein is Glucose-6-phosphate isomerase of Shewanella baltica (strain OS155 / ATCC BAA-1091).